The chain runs to 310 residues: Cysteine synthase (310 aa).

Residue Lys-44 is modified to N6-(pyridoxal phosphate)lysine. Residues Asn-74, 179–183 (GTGGT), and Ser-267 contribute to the pyridoxal 5'-phosphate site.

Belongs to the cysteine synthase/cystathionine beta-synthase family. Requires pyridoxal 5'-phosphate as cofactor.

It catalyses the reaction O-acetyl-L-serine + hydrogen sulfide = L-cysteine + acetate. It functions in the pathway amino-acid biosynthesis; L-cysteine biosynthesis; L-cysteine from L-serine: step 2/2. This chain is Cysteine synthase (cysK), found in Neisseria meningitidis serogroup B (strain ATCC BAA-335 / MC58).